The chain runs to 159 residues: Cytochrome c nitrite reductase subunit NrfH (159 aa).

At 2-14 the chain is on the cytoplasmic side; the sequence is SEEKSRNGPARLK. Residues 15-33 traverse the membrane as a helical; Signal-anchor for type II membrane protein segment; the sequence is LVLGGATLGVVALATVAFG. The Periplasmic portion of the chain corresponds to 34-159; sequence MKYTDQRPFC…PISTREVADE (126 aa). Positions 43, 46, 49, 61, and 66 each coordinate heme. Asn-67 contributes to the a menaquinol binding site. 2 residues coordinate heme: Cys-69 and His-70. The a menaquinol site is built by Lys-82 and Asp-89. Residue Asp-89 participates in heme binding. Positions 99 to 100 are interaction with NrfA; it reads GD. Heme is bound by residues Cys-116, Cys-119, His-120, Cys-136, Cys-139, His-140, and His-145. The segment at 123 to 158 is interaction with NrfA; that stretch reads TNVEVASMEAKKYCTDCHRNVQHMRMKPISTREVAD.

This sequence belongs to the NapC/NirT/NrfH family. As to quaternary structure, component of the NrfHA cytochrome c nitrite reductase complex composed of 4 NrfA catalytic subunits and 2 NrfH quinone-binding subunits. Interacts with NrfA homodimer. The cofactor is heme.

It is found in the cell inner membrane. In terms of biological role, electron donor subunit of the cytochrome c nitrite reductase holocomplex NrfHA. Acquires electrons from the menaquinone pool and mediates their transfer to the catalytic subunit NrfA in an anaerobic respiratory process of nitrite. The other biological function of the NrfHA holocomplex is to detoxify nitrite. This function is essential for the survival of this organism as it enables it to overcome inhibition by nitrite, which is produced by other organisms living in the same environment. The sequence is that of Cytochrome c nitrite reductase subunit NrfH from Nitratidesulfovibrio vulgaris (strain ATCC 29579 / DSM 644 / CCUG 34227 / NCIMB 8303 / VKM B-1760 / Hildenborough) (Desulfovibrio vulgaris).